The sequence spans 151 residues: Leukocyte cell-derived chemotaxin-2 (151 aa).

A signal peptide spans 1–18; that stretch reads MIPTTILISAALLSSALA. 3 cysteine pairs are disulfide-bonded: Cys-25-Cys-60, Cys-36-Cys-41, and Cys-99-Cys-142. The Zn(2+) site is built by His-53, Asp-57, and His-138.

Belongs to the LECT2/MIM-1 family. Highly expressed in liver and weakly in testis. Not expressed in heart, brain, spleen, lung, skeletal muscle and kidney.

It localises to the secreted. Its function is as follows. Has a neutrophil chemotactic activity. Also a positive regulator of chondrocyte proliferation. The chain is Leukocyte cell-derived chemotaxin-2 (Lect2) from Mus musculus (Mouse).